The chain runs to 194 residues: Large ribosomal subunit protein eL15 (194 aa).

Over residues 162 to 173 (KTSAGRRARGLH) the composition is skewed to basic residues. The segment at 162–194 (KTSAGRRARGLHNRGTGTEKCRPSLTSHKNQGK) is disordered. Positions 185 to 194 (SLTSHKNQGK) are enriched in polar residues.

Belongs to the eukaryotic ribosomal protein eL15 family.

In Methanocorpusculum labreanum (strain ATCC 43576 / DSM 4855 / Z), this protein is Large ribosomal subunit protein eL15.